Consider the following 636-residue polypeptide: 1-deoxy-D-xylulose-5-phosphate synthase (636 aa).

Thiamine diphosphate-binding positions include His75 and 116 to 118 (AHS). Position 147 (Asp147) interacts with Mg(2+). Residues 148 to 149 (GA), Asn177, Tyr288, and Glu370 each bind thiamine diphosphate. Residue Asn177 participates in Mg(2+) binding.

Belongs to the transketolase family. DXPS subfamily. Homodimer. It depends on Mg(2+) as a cofactor. Requires thiamine diphosphate as cofactor.

The enzyme catalyses D-glyceraldehyde 3-phosphate + pyruvate + H(+) = 1-deoxy-D-xylulose 5-phosphate + CO2. It functions in the pathway metabolic intermediate biosynthesis; 1-deoxy-D-xylulose 5-phosphate biosynthesis; 1-deoxy-D-xylulose 5-phosphate from D-glyceraldehyde 3-phosphate and pyruvate: step 1/1. Catalyzes the acyloin condensation reaction between C atoms 2 and 3 of pyruvate and glyceraldehyde 3-phosphate to yield 1-deoxy-D-xylulose-5-phosphate (DXP). The protein is 1-deoxy-D-xylulose-5-phosphate synthase of Ralstonia pickettii (strain 12J).